A 498-amino-acid polypeptide reads, in one-letter code: ATP synthase subunit beta, chloroplastic (498 aa).

Position 172–179 (172–179 (GGAGVGKT)) interacts with ATP.

Belongs to the ATPase alpha/beta chains family. F-type ATPases have 2 components, CF(1) - the catalytic core - and CF(0) - the membrane proton channel. CF(1) has five subunits: alpha(3), beta(3), gamma(1), delta(1), epsilon(1). CF(0) has four main subunits: a(1), b(1), b'(1) and c(9-12).

The protein resides in the plastid. It is found in the chloroplast thylakoid membrane. It carries out the reaction ATP + H2O + 4 H(+)(in) = ADP + phosphate + 5 H(+)(out). Its function is as follows. Produces ATP from ADP in the presence of a proton gradient across the membrane. The catalytic sites are hosted primarily by the beta subunits. The protein is ATP synthase subunit beta, chloroplastic of Magnolia tripetala (Umbrella-tree).